Consider the following 504-residue polypeptide: Anaerobic nitric oxide reductase transcription regulator NorR (504 aa).

Asp-57 is modified (4-aspartylphosphate). The Sigma-54 factor interaction domain occupies 187 to 416 (MIGLSPGMTQ…LEHAIHRAVV (230 aa)). ATP-binding positions include 215–222 (GETGTGKE) and 278–287 (ADNGTLFLDE). Positions 479 to 498 (WAASARMLETDVANLHRLAK) form a DNA-binding region, H-T-H motif.

It participates in nitrogen metabolism; nitric oxide reduction. Its function is as follows. Required for the expression of anaerobic nitric oxide (NO) reductase, acts as a transcriptional activator for at least the norVW operon. Activation also requires sigma-54. This is Anaerobic nitric oxide reductase transcription regulator NorR from Escherichia fergusonii (strain ATCC 35469 / DSM 13698 / CCUG 18766 / IAM 14443 / JCM 21226 / LMG 7866 / NBRC 102419 / NCTC 12128 / CDC 0568-73).